Reading from the N-terminus, the 353-residue chain is Peroxisome assembly protein 12-A (353 aa).

The Peroxisomal matrix segment spans residues 1–19; it reads MAERGAHITTTSASDDRPS. A helical transmembrane segment spans residues 20 to 47; it reads IFEVVAQESLMAAARPALHHIVKVLAES. Topologically, residues 48 to 51 are cytoplasmic; that stretch reads NPSR. Residues 52-76 traverse the membrane as a helical segment; that stretch reads YGTLWRWFDELYTLLDWLLQQHYLS. Topologically, residues 77–104 are peroxisomal matrix; the sequence is WASASFSENFYGLKRITLGKEVGQRNLP. Residues 105 to 134 form a helical membrane-spanning segment; that stretch reads RKEYWKSLLLLVLIPYLRVKLEKIVNRLRE. The Cytoplasmic portion of the chain corresponds to 135-139; that stretch reads EQDYS. Residues 140 to 178 traverse the membrane as a helical segment; it reads IQNPTSFHKRCYKAILASYPFVKLGWEAWFLFYQLRYIL. Residues 179–243 lie on the Peroxisomal matrix side of the membrane; it reads WNGKNHSPLL…LGAVALSVSS (65 aa). The chain crosses the membrane as a helical span at residues 244–271; it reads SLSLGVFFLQFLDWWYSAENQETLKSLN. Topologically, residues 272–353 are cytoplasmic; sequence NLPVPPPPIH…HLIKLYTPDG (82 aa). Zn(2+) contacts are provided by cysteine 298, cysteine 301, cysteine 319, and cysteine 322. The RING-type; degenerate zinc-finger motif lies at 298–337; it reads CPLCRKVRVNDTALGTSGYVFCYRCAYYYVKTHQRCPVSG.

This sequence belongs to the pex2/pex10/pex12 family. Component of the PEX2-PEX10-PEX12 retrotranslocation channel.

The protein localises to the peroxisome membrane. The protein operates within protein modification; protein ubiquitination. Its function is as follows. Component of a retrotranslocation channel required for peroxisome organization by mediating export of the PEX5 receptor from peroxisomes to the cytosol, thereby promoting PEX5 recycling. The retrotranslocation channel is composed of PEX2, PEX10 and PEX12; each subunit contributing transmembrane segments that coassemble into an open channel that specifically allows the passage of PEX5 through the peroxisomal membrane. PEX12 also regulates PEX5 recycling by activating the E3 ubiquitin-protein ligase activity of PEX10. When PEX5 recycling is compromised, PEX12 stimulates PEX10-mediated polyubiquitination of PEX5, leading to its subsequent degradation. The chain is Peroxisome assembly protein 12-A from Xenopus laevis (African clawed frog).